Reading from the N-terminus, the 256-residue chain is Glutamate racemase (256 aa).

Residues 5-6 (DS) and 37-38 (YG) each bind substrate. Residue Cys69 is the Proton donor/acceptor of the active site. 70–71 (NT) contributes to the substrate binding site. Cys181 (proton donor/acceptor) is an active-site residue. 182–183 (TH) is a binding site for substrate.

It belongs to the aspartate/glutamate racemases family.

It carries out the reaction L-glutamate = D-glutamate. It functions in the pathway cell wall biogenesis; peptidoglycan biosynthesis. In terms of biological role, provides the (R)-glutamate required for cell wall biosynthesis. The chain is Glutamate racemase from Buchnera aphidicola subsp. Schizaphis graminum (strain Sg).